The primary structure comprises 207 residues: Outer-membrane lipoprotein LolB (207 aa).

The N-terminal stretch at 1–21 is a signal peptide; that stretch reads MPLPDFRLIRLLPLAALVLTA. Cys-22 is lipidated: N-palmitoyl cysteine. Cys-22 carries S-diacylglycerol cysteine lipidation.

Belongs to the LolB family. As to quaternary structure, monomer.

The protein resides in the cell outer membrane. Functionally, plays a critical role in the incorporation of lipoproteins in the outer membrane after they are released by the LolA protein. This chain is Outer-membrane lipoprotein LolB, found in Escherichia coli O127:H6 (strain E2348/69 / EPEC).